The chain runs to 214 residues: Large ribosomal subunit protein uL3 (214 aa).

Positions 131–155 (GAQRTSHGNSRSHRVPGSIGMAQDP) are disordered. At Gln-153 the chain carries N5-methylglutamine.

The protein belongs to the universal ribosomal protein uL3 family. As to quaternary structure, part of the 50S ribosomal subunit. Forms a cluster with proteins L14 and L19. In terms of processing, methylated by PrmB.

Functionally, one of the primary rRNA binding proteins, it binds directly near the 3'-end of the 23S rRNA, where it nucleates assembly of the 50S subunit. In Neisseria gonorrhoeae (strain ATCC 700825 / FA 1090), this protein is Large ribosomal subunit protein uL3.